We begin with the raw amino-acid sequence, 550 residues long: Coiled-coil domain-containing protein 102A (550 aa).

Disordered regions lie at residues 1–69 (MSHG…DGDW) and 138–247 (GARR…ATEE). 3 positions are modified to phosphoserine: S12, S26, and S28. Positions 37–61 (SLPPTPPSGTPSPGPPPALPLPPAP) are enriched in pro residues. Residues 72–161 (REELRLRELE…ARGRELARLR (90 aa)) adopt a coiled-coil conformation. 2 stretches are compositionally biased toward basic and acidic residues: residues 138-159 (GARR…ELAR) and 169-188 (QTRD…DVGS). Coiled coils occupy residues 263–396 (QKVL…RRQT) and 427–518 (KLKK…NAPL). Disordered stretches follow at residues 472-497 (DELD…QSEN) and 509-550 (LRRQ…IQVA). Residues 530 to 550 (EEAEDGTSDLDEDEDLQIQVA) show a composition bias toward acidic residues. At S537 the chain carries Phosphoserine.

The sequence is that of Coiled-coil domain-containing protein 102A (CCDC102A) from Homo sapiens (Human).